Here is a 137-residue protein sequence, read N- to C-terminus: Protein archease (137 aa).

Ca(2+) is bound by residues aspartate 11, aspartate 136, and isoleucine 137.

Belongs to the archease family.

Its function is as follows. Activates the tRNA-splicing ligase complex by facilitating the enzymatic turnover of catalytic subunit RtcB. Acts by promoting the guanylylation of RtcB, a key intermediate step in tRNA ligation. Can also alter the NTP specificity of RtcB such that ATP, dGTP or ITP is used efficiently. The protein is Protein archease of Archaeoglobus fulgidus (strain ATCC 49558 / DSM 4304 / JCM 9628 / NBRC 100126 / VC-16).